The following is a 642-amino-acid chain: Threonine--tRNA ligase (642 aa).

Residues 1-61 (MPVITLPDGS…ESDAQLAIIT (61 aa)) form the TGS domain. The segment at 243-534 (DHRKIGKQLD…LTEEYAGFFP (292 aa)) is catalytic. C334, H385, and H511 together coordinate Zn(2+).

It belongs to the class-II aminoacyl-tRNA synthetase family. As to quaternary structure, homodimer. The cofactor is Zn(2+).

It localises to the cytoplasm. The enzyme catalyses tRNA(Thr) + L-threonine + ATP = L-threonyl-tRNA(Thr) + AMP + diphosphate + H(+). Its function is as follows. Catalyzes the attachment of threonine to tRNA(Thr) in a two-step reaction: L-threonine is first activated by ATP to form Thr-AMP and then transferred to the acceptor end of tRNA(Thr). Also edits incorrectly charged L-seryl-tRNA(Thr). The chain is Threonine--tRNA ligase from Yersinia pseudotuberculosis serotype O:1b (strain IP 31758).